We begin with the raw amino-acid sequence, 795 residues long: Delta-1-pyrroline-5-carboxylate synthase (795 aa).

Residues 1–361 (MLRHMHRSGV…FFSEVKPAGP (361 aa)) form a glutamate 5-kinase region. Substrate-binding residues include serine 117, aspartate 223, and asparagine 246. Residues 266-267 (SD) and 305-311 (LGGMEAK) contribute to the ATP site. N6-succinyllysine is present on residues lysine 311, lysine 347, and lysine 550. The segment at 362–795 (TVEQQGEMAR…NLPVPQRNFS (434 aa)) is gamma-glutamyl phosphate reductase.

It in the N-terminal section; belongs to the glutamate 5-kinase family. The protein in the C-terminal section; belongs to the gamma-glutamyl phosphate reductase family. In terms of assembly, can form homodimers/multimers.

The protein resides in the mitochondrion matrix. It catalyses the reaction L-glutamate + ATP = L-glutamyl 5-phosphate + ADP. It carries out the reaction L-glutamate 5-semialdehyde + phosphate + NADP(+) = L-glutamyl 5-phosphate + NADPH + H(+). The protein operates within amino-acid biosynthesis; L-proline biosynthesis; L-glutamate 5-semialdehyde from L-glutamate: step 1/2. It participates in amino-acid biosynthesis; L-proline biosynthesis; L-glutamate 5-semialdehyde from L-glutamate: step 2/2. Isoform Short: Inhibited by L-ornithine with a Ki of approximately 0.25 mm. Isoform Long: Insensitive to ornithine inhibition. Thus, the two amino acid insert in the long isoform abolishes feedback inhibition of P5CS activity by L-ornithine. Bifunctional enzyme that converts glutamate to glutamate 5-semialdehyde, an intermediate in the biosynthesis of proline, ornithine and arginine. The sequence is that of Delta-1-pyrroline-5-carboxylate synthase (Aldh18a1) from Mus musculus (Mouse).